Here is a 610-residue protein sequence, read N- to C-terminus: tRNA uridine 5-carboxymethylaminomethyl modification enzyme MnmG (610 aa).

14–19 (GAGHAG) contacts FAD. 274–288 (GPRYCPSIEDKIVKF) serves as a coordination point for NAD(+).

The protein belongs to the MnmG family. In terms of assembly, homodimer. Heterotetramer of two MnmE and two MnmG subunits. FAD serves as cofactor.

The protein resides in the cytoplasm. Its function is as follows. NAD-binding protein involved in the addition of a carboxymethylaminomethyl (cmnm) group at the wobble position (U34) of certain tRNAs, forming tRNA-cmnm(5)s(2)U34. The sequence is that of tRNA uridine 5-carboxymethylaminomethyl modification enzyme MnmG from Chlamydia trachomatis serovar L2b (strain UCH-1/proctitis).